The following is a 177-amino-acid chain: Large ribosomal subunit protein uL6 (177 aa).

The protein belongs to the universal ribosomal protein uL6 family. In terms of assembly, part of the 50S ribosomal subunit.

This protein binds to the 23S rRNA, and is important in its secondary structure. It is located near the subunit interface in the base of the L7/L12 stalk, and near the tRNA binding site of the peptidyltransferase center. This is Large ribosomal subunit protein uL6 from Aeromonas hydrophila subsp. hydrophila (strain ATCC 7966 / DSM 30187 / BCRC 13018 / CCUG 14551 / JCM 1027 / KCTC 2358 / NCIMB 9240 / NCTC 8049).